The following is an 804-amino-acid chain: Phenylalanine--tRNA ligase beta subunit (804 aa).

The tRNA-binding domain maps to 39-155; sequence AEGLKKIVVG…ADVKPGEEVY (117 aa). The region spanning 408 to 483 is the B5 domain; it reads RNPSVVKTTV…RIYGYDNLKS (76 aa). Mg(2+) contacts are provided by Asp-461, Asp-467, Glu-470, and Glu-471. The FDX-ACB domain maps to 711-804; sequence PKFPAIERDL…LKESLKIKVR (94 aa).

Belongs to the phenylalanyl-tRNA synthetase beta subunit family. Type 1 subfamily. Tetramer of two alpha and two beta subunits. Requires Mg(2+) as cofactor.

Its subcellular location is the cytoplasm. It catalyses the reaction tRNA(Phe) + L-phenylalanine + ATP = L-phenylalanyl-tRNA(Phe) + AMP + diphosphate + H(+). The sequence is that of Phenylalanine--tRNA ligase beta subunit from Lactobacillus johnsonii (strain CNCM I-12250 / La1 / NCC 533).